The primary structure comprises 461 residues: Inositol-trisphosphate 3-kinase A (461 aa).

A disordered region spans residues 1-29 (MTLPGGPTGMARPGGARPCSPGLERAPRR). The tract at residues 1–133 (MTLPGGPTGM…SVSSTGSSSL (133 aa)) is required for cytoskeleton location. Omega-N-methylarginine is present on residues R35, R55, and R62. Residues 49–160 (AAAGEPRARG…GNVQLEAGED (112 aa)) form a disordered region. The span at 118–134 (RRLSTSSVSSTGSSSLL) shows a compositional bias: low complexity. A phosphoserine mark is found at S137 and S197. ATP is bound by residues S197, K209, 249-251 (QDL), and D262. 2 residues coordinate substrate: K264 and R285. The calmodulin-binding stretch occupies residues 287–295 (DMYKKMLAV). 312 to 319 (KPRYMQWR) contributes to the substrate binding site. ATP is bound by residues K336 and D416. K419 contributes to the substrate binding site.

Belongs to the inositol phosphokinase (IPK) family. As to expression, expressed in brain.

The protein resides in the cytoplasm. It is found in the cytoskeleton. It carries out the reaction 1D-myo-inositol 1,4,5-trisphosphate + ATP = 1D-myo-inositol 1,3,4,5-tetrakisphosphate + ADP + H(+). Its activity is regulated as follows. Activated by calcium/calmodulin. Functionally, catalyzes the phosphorylation of 1D-myo-inositol 1,4,5-trisphosphate (InsP3) into 1D-myo-inositol 1,3,4,5-tetrakisphosphate and participates to the regulation of calcium homeostasis. This is Inositol-trisphosphate 3-kinase A from Homo sapiens (Human).